The chain runs to 488 residues: Glutamate--tRNA ligase (488 aa).

The short motif at 8–18 (PSPTGPLHIGG) is the 'HIGH' region element. Residues Cys105, Cys107, Cys132, and His134 each contribute to the Zn(2+) site. A 'KMSKS' region motif is present at residues 249-253 (KMSKR). Position 252 (Lys252) interacts with ATP.

The protein belongs to the class-I aminoacyl-tRNA synthetase family. Glutamate--tRNA ligase type 1 subfamily. Monomer. Requires Zn(2+) as cofactor.

It localises to the cytoplasm. It carries out the reaction tRNA(Glu) + L-glutamate + ATP = L-glutamyl-tRNA(Glu) + AMP + diphosphate. Catalyzes the attachment of glutamate to tRNA(Glu) in a two-step reaction: glutamate is first activated by ATP to form Glu-AMP and then transferred to the acceptor end of tRNA(Glu). This chain is Glutamate--tRNA ligase, found in Desulfitobacterium hafniense (strain Y51).